Here is a 383-residue protein sequence, read N- to C-terminus: Aurachin C monooxygenase/isomerase (383 aa).

Residues G15, S47, V128, D285, and 295–299 (GQGGC) contribute to the FAD site.

It depends on FAD as a cofactor.

The enzyme catalyses aurachin C + NADH + O2 + H(+) = 4-hydroxy-2-methyl-3-oxo-4-[(2E,6E)-farnesyl]-3,4-dihydroquinoline 1-oxide + NAD(+) + H2O. It catalyses the reaction aurachin C + NADPH + O2 + H(+) = 4-hydroxy-2-methyl-3-oxo-4-[(2E,6E)-farnesyl]-3,4-dihydroquinoline 1-oxide + NADP(+) + H2O. The catalysed reaction is aurachin C + NADH + O2 + H(+) = aurachin C epoxide + NAD(+) + H2O. It carries out the reaction aurachin C + NADPH + O2 + H(+) = aurachin C epoxide + NADP(+) + H2O. The enzyme catalyses aurachin C epoxide = 2-hydroxy-1a-methyl-7a-[(2E,6E)-farnesyl]-1a,2-dihydrooxireno[2,3-b]quinolin-7(7aH)-one. It catalyses the reaction 2-hydroxy-1a-methyl-7a-[(2E,6E)-farnesyl]-1a,2-dihydrooxireno[2,3-b]quinolin-7(7aH)-one = 4-hydroxy-2-methyl-3-oxo-4-[(2E,6E)-farnesyl]-3,4-dihydroquinoline 1-oxide. Its function is as follows. Catalyzes the initial step in the conversion of aurachin C to aurachin B. Catalyzes the epoxidation of the C(2)-C(3) double bond of aurachin C, which is followed by a semipinacol rearrangement, causing migration of the farnesyl group from C(3) to C(4). Accepts both NADH and NADPH, but has a preference for NADH. In Stigmatella aurantiaca, this protein is Aurachin C monooxygenase/isomerase.